The sequence spans 440 residues: L-gulonolactone oxidase (440 aa).

One can recognise an FAD-binding PCMH-type domain in the interval 17-187; it reads YGCCPEMYFQ…LTVTLQCVPQ (171 aa). His-54 is subject to Pros-8alpha-FAD histidine. Residues 253–273 form a helical membrane-spanning segment; sequence FYLLEFLLWISTFLPGLVGWI.

The protein belongs to the oxygen-dependent FAD-linked oxidoreductase family. Requires FAD as cofactor.

The protein localises to the microsome membrane. It is found in the endoplasmic reticulum membrane. It catalyses the reaction L-gulono-1,4-lactone + O2 = L-ascorbate + H2O2 + H(+). It participates in cofactor biosynthesis; L-ascorbate biosynthesis via UDP-alpha-D-glucuronate pathway; L-ascorbate from UDP-alpha-D-glucuronate: step 4/4. In terms of biological role, oxidizes L-gulono-1,4-lactone to hydrogen peroxide and L-xylo-hexulonolactone which spontaneously isomerizes to L-ascorbate. This Bos taurus (Bovine) protein is L-gulonolactone oxidase (GULO).